The sequence spans 827 residues: DNA gyrase subunit A (827 aa).

Residues Leu-38 to Leu-501 enclose the Topo IIA-type catalytic domain. The O-(5'-phospho-DNA)-tyrosine intermediate role is filled by Tyr-126. The short motif at Gln-528–Gly-534 is the GyrA-box element.

It belongs to the type II topoisomerase GyrA/ParC subunit family. Heterotetramer, composed of two GyrA and two GyrB chains. In the heterotetramer, GyrA contains the active site tyrosine that forms a transient covalent intermediate with DNA, while GyrB binds cofactors and catalyzes ATP hydrolysis.

Its subcellular location is the cytoplasm. It carries out the reaction ATP-dependent breakage, passage and rejoining of double-stranded DNA.. In terms of biological role, a type II topoisomerase that negatively supercoils closed circular double-stranded (ds) DNA in an ATP-dependent manner to modulate DNA topology and maintain chromosomes in an underwound state. Negative supercoiling favors strand separation, and DNA replication, transcription, recombination and repair, all of which involve strand separation. Also able to catalyze the interconversion of other topological isomers of dsDNA rings, including catenanes and knotted rings. Type II topoisomerases break and join 2 DNA strands simultaneously in an ATP-dependent manner. The sequence is that of DNA gyrase subunit A from Helicobacter pylori (strain ATCC 700392 / 26695) (Campylobacter pylori).